The chain runs to 125 residues: Translation initiation factor 5A (125 aa).

Lysine 35 carries the post-translational modification Hypusine.

The protein belongs to the eIF-5A family.

Its subcellular location is the cytoplasm. Functionally, functions by promoting the formation of the first peptide bond. This chain is Translation initiation factor 5A (eIF5A), found in Methanosphaerula palustris (strain ATCC BAA-1556 / DSM 19958 / E1-9c).